We begin with the raw amino-acid sequence, 399 residues long: CLOCK-interacting pacemaker (399 aa).

Basic and acidic residues predominate over residues 1–12 (MERKNSSRESPR). 2 disordered regions span residues 1 to 85 (MERK…AKNA) and 159 to 224 (SYTK…KLAE). At Ser-213 the chain carries Phosphoserine. Residues 333–359 (TLKTKELIRQNQATQVELDQLKEQTQL) adopt a coiled-coil conformation. Residues 378–388 (SLTPGSSNTGS) show a composition bias toward polar residues. The tract at residues 378-399 (SLTPGSSNTGSDLEAFSDHPDI) is disordered.

As to quaternary structure, interacts with CLOCK. Forms a ternary complex with the CLOCK-BMAL1 heterodimer. Interacts with CAD and HSPA5.

It is found in the nucleus. The protein resides in the cytoplasm. Its subcellular location is the cytosol. Transcriptional repressor which may act as a negative-feedback regulator of CLOCK-BMAL1 transcriptional activity in the circadian-clock mechanism. May stimulate BMAL1-dependent phosphorylation of CLOCK. However, the physiological relevance of these observations is unsure, since experiments in knockout mice showed that CIPC is not critially required for basic circadian clock. This is CLOCK-interacting pacemaker (CIPC) from Pongo abelii (Sumatran orangutan).